The chain runs to 639 residues: Polyphenol oxidase, chloroplastic (639 aa).

Residues 1 to 101 constitute a chloroplast transit peptide; the sequence is MATLSSPTII…EGANYYNTLA (101 aa). A disordered region spans residues 35 to 58; sequence GVRSVNGKVSCQTKNNNGNDENNQ. 2 disulfide bridges follow: Cys111–Cys127 and Cys126–Cys194. Cu cation-binding residues include His193, His214, His223, His354, His358, and His388. The 2'-(S-cysteinyl)-histidine (Cys-His) cross-link spans 197 to 214; it reads CDGSYPVLGHNDTRLEVH.

This sequence belongs to the tyrosinase family. Requires Cu(2+) as cofactor.

It is found in the plastid. It localises to the chloroplast thylakoid lumen. It catalyses the reaction 2 catechol + O2 = 2 1,2-benzoquinone + 2 H2O. Catalyzes the oxidation of mono- and o-diphenols to o-diquinones. This Spinacia oleracea (Spinach) protein is Polyphenol oxidase, chloroplastic.